Consider the following 189-residue polypeptide: Peptidyl-tRNA hydrolase (189 aa).

Position 15 (Tyr-15) interacts with tRNA. Catalysis depends on His-20, which acts as the Proton acceptor. Phe-66, Asn-68, and Asn-114 together coordinate tRNA.

Belongs to the PTH family. As to quaternary structure, monomer.

The protein localises to the cytoplasm. It catalyses the reaction an N-acyl-L-alpha-aminoacyl-tRNA + H2O = an N-acyl-L-amino acid + a tRNA + H(+). Its function is as follows. Hydrolyzes ribosome-free peptidyl-tRNAs (with 1 or more amino acids incorporated), which drop off the ribosome during protein synthesis, or as a result of ribosome stalling. In terms of biological role, catalyzes the release of premature peptidyl moieties from peptidyl-tRNA molecules trapped in stalled 50S ribosomal subunits, and thus maintains levels of free tRNAs and 50S ribosomes. The polypeptide is Peptidyl-tRNA hydrolase (Streptococcus equi subsp. zooepidemicus (strain MGCS10565)).